The primary structure comprises 550 residues: Forkhead box protein N4 (550 aa).

Residues 231-327 constitute a DNA-binding region (fork-head); it reads KPIYSYSCLI…EEMQKWKRKD (97 aa). Residues 402–411 are compositionally biased toward low complexity; sequence LQNQSRLAPS. The interval 402-437 is disordered; that stretch reads LQNQSRLAPSSPAPAQTPPLHTVPDMTNSSLPQHPA.

In terms of tissue distribution, isoform 1 is expressed mainly in adult thymus. Isoform 2 is detected in adult skin. Isoform 3 is expressed in adult brain and embryo. Prominent expression sites include the olfactory placode, the basal layer of the olfactory epithelium, the neuroepithelium of the developing retina, the germinal zone of the differentiated eye, regions of motoneuron development in the neural tube and periventricular regions of the brain.

It is found in the nucleus. In terms of biological role, transcription factor essential for neural and some non-neural tissues development. Binds to an 11-bp consensus sequence containing the invariant tetranucleotide 5'-ACGC-3'. During development of the central nervous system, required to specify the amacrine and horizontal cell fates from multipotent retinal progenitors while suppressing the alternative photoreceptor cell fates. Drives commitment of p2 progenitors to the V2b interneuron fates during spinal cord neurogenesis. In development of non-neural tissues, plays an essential role in the specification of the atrioventricular canal. The chain is Forkhead box protein N4 (foxn4) from Danio rerio (Zebrafish).